The following is a 380-amino-acid chain: Putative zinc finger protein C02F5.12 (380 aa).

The segment at 137-187 is disordered; the sequence is NLDIPGTSSDIPSDPSSALKVPKKEVLDESEEILDQTSGSSSFSLNDSEQA. 2 stretches are compositionally biased toward polar residues: residues 142–152 and 171–187; these read GTSSDIPSDPS and DQTS…SEQA. The C2H2-type zinc finger occupies 271–294; sequence IPCKLCGFECTNVRRMRSHYAKAH.

It is found in the nucleus. The chain is Putative zinc finger protein C02F5.12 from Caenorhabditis elegans.